Reading from the N-terminus, the 244-residue chain is Chlorosome protein I (244 aa).

Residues 1–95 (MNLIINDKTA…TVKVLSRPEE (95 aa)) enclose the 2Fe-2S ferredoxin-type domain. Residues cysteine 33, cysteine 39, cysteine 42, and cysteine 77 each coordinate [2Fe-2S] cluster.

Requires [2Fe-2S] cluster as cofactor.

Its subcellular location is the chlorosome. In terms of biological role, could play a direct role in the oxidation or reduction of the quenching species formed in the chlorosome. The chain is Chlorosome protein I (csmI) from Chlorobaculum tepidum (strain ATCC 49652 / DSM 12025 / NBRC 103806 / TLS) (Chlorobium tepidum).